We begin with the raw amino-acid sequence, 768 residues long: Polyadenylate-binding protein, cytoplasmic and nuclear (768 aa).

Residues 1–11 (MSAETATNPPV) show a composition bias toward polar residues. The interval 1–52 (MSAETATNPPVDTTPGAAPESATNGSNANVAADTTAGEASQTTSSTTPTAQP) is disordered. Over residues 39 to 52 (ASQTTSSTTPTAQP) the composition is skewed to low complexity. RRM domains follow at residues 55 to 133 (ASLY…WSQR), 143 to 220 (GNVF…HHIA), 236 to 314 (TNVY…RAQK), and 340 to 470 (VNLY…LAQR). 3 disordered regions span residues 374–428 (DFAP…EKKP), 633–662 (QQGMGRPGQAGRGQGAPAQAVGQRDENASP), and 739–768 (KNKGGDSGEPAADANKSKDASQETAEETKS). The span at 637-646 (GRPGQAGRGQ) shows a compositional bias: gly residues. A PABC domain is found at 662–739 (PNGLTLQVLN…ALTVYDEYVK (78 aa)). Over residues 753 to 768 (NKSKDASQETAEETKS) the composition is skewed to basic and acidic residues.

It belongs to the polyadenylate-binding protein type-1 family.

It is found in the cytoplasm. It localises to the nucleus. Binds the poly(A) tail of mRNA. Appears to be an important mediator of the multiple roles of the poly(A) tail in mRNA biogenesis, stability and translation. In the nucleus, involved in both mRNA cleavage and polyadenylation. Is also required for efficient mRNA export to the cytoplasm. Acts in concert with a poly(A)-specific nuclease (PAN) to affect poly(A) tail shortening, which may occur concomitantly with either nucleocytoplasmic mRNA transport or translational initiation. In the cytoplasm, stimulates translation initiation and regulates mRNA decay through translation termination-coupled poly(A) shortening, probably mediated by PAN. The sequence is that of Polyadenylate-binding protein, cytoplasmic and nuclear (PAB1) from Coccidioides immitis (strain RS) (Valley fever fungus).